The following is a 1587-amino-acid chain: DNA topoisomerase 2 (1587 aa).

The segment covering 1–15 (MSDADPFDMSDDDDN) has biased composition (acidic residues). Positions 1–47 (MSDADPFDMSDDDDNSVLSHTPPKKQKKAPTTKKGGSKPLADVENES) are disordered. Positions 22-31 (PPKKQKKAPT) are enriched in basic residues. ATP is bound by residues Asn126, Asn155, 183 to 185 (SSN), and 196 to 203 (GRNGFGAK). Interaction with DNA stretches follow at residues 381 to 383 (KKK) and 381 to 386 (KKKNKN). 415–417 (QTK) serves as a coordination point for ATP. Positions 461-485 (MLKKTDGGRRSRMNNPKLTDANKAG) are disordered. The Toprim domain occupies 492–606 (CTLILTEGDS…SLLKIPEFLI (115 aa)). Residues Glu498, Asp575, and Asp577 each contribute to the Mg(2+) site. Residues 743–1190 (IPSVVDGLKP…SKEDIWKRDL (448 aa)) form the Topo IIA-type catalytic domain. The O-(5'-phospho-DNA)-tyrosine intermediate role is filled by Tyr833. The interaction with DNA stretch occupies residues 1016-1025 (KLSKTMTTTN). The disordered stretch occupies residues 1204-1587 (EARRQRKVAN…PRPRRPRRRS (384 aa)). Positions 1271-1280 (LSFLGKSSAK) are enriched in low complexity. Residues 1308-1320 (PKSEPKADPKPKD) show a composition bias toward basic and acidic residues. The segment covering 1321 to 1334 (EDEDIVMEDSDIEE) has biased composition (acidic residues). Over residues 1348–1364 (VKPESEDGQAKIAEAPK) the composition is skewed to basic and acidic residues. Positions 1365–1375 (RGRAAAKPKPK) are enriched in basic residues. 2 stretches are compositionally biased toward acidic residues: residues 1379–1391 (EDEEDELDDDDFM) and 1419–1430 (SDSDSDNGDDLL). Polar residues-rich tracts occupy residues 1441 to 1451 (GSTNGASTSDS) and 1466 to 1475 (GLKTTASKAS). The segment covering 1512–1521 (DNEPEDDDDE) has biased composition (acidic residues). The span at 1524 to 1542 (KPAAKGKAAAKGKSTAAAA) shows a compositional bias: low complexity. The segment covering 1558–1568 (PKPPPRLPCPL) has biased composition (pro residues). The segment covering 1571–1587 (RRTHRSNPRPRRPRRRS) has biased composition (basic residues).

This sequence belongs to the type II topoisomerase family. In terms of assembly, homodimer. The cofactor is Mg(2+). Mn(2+) serves as cofactor. It depends on Ca(2+) as a cofactor.

It is found in the nucleus. The catalysed reaction is ATP-dependent breakage, passage and rejoining of double-stranded DNA.. Its function is as follows. Control of topological states of DNA by transient breakage and subsequent rejoining of DNA strands. Topoisomerase II makes double-strand breaks. This Penicillium chrysogenum (Penicillium notatum) protein is DNA topoisomerase 2 (TOP2).